A 138-amino-acid chain; its full sequence is U1 small nuclear ribonucleoprotein C (138 aa).

The Matrin-type zinc-finger motif lies at 4–36 (FYCDYCDTYLTHDSPSVRKTHCSGRKHKENVRD). Y8 carries the phosphotyrosine modification. Residue S17 is modified to Phosphoserine. Position 52 is an N6-acetyllysine (K52). The tract at residues 62-99 (IPPNLFSAPPLGGPMIPPPHPSMMGPPPPGMMPVGPPP) is disordered. Residues 72–99 (LGGPMIPPPHPSMMGPPPPGMMPVGPPP) are compositionally biased toward pro residues.

This sequence belongs to the U1 small nuclear ribonucleoprotein C family. In terms of assembly, component of the U1 snRNP. The U1 snRNP is composed of the U1 snRNA and the 7 core Sm proteins SNRPB, SNRPD1, SNRPD2, SNRPD3, SNRPE, SNRPF and SNRPG that assemble in a heptameric protein ring on the Sm site of the small nuclear RNA to form the core snRNP, and at least 3 U1 snRNP-specific proteins SNRNP70/U1-70K, SNRPA/U1-A and SNRPC/U1-C. SNRPC/U1-C interacts with U1 snRNA and the 5' splice-site region of the pre-mRNA. Interacts (via N-terminus) with TIA1 (via C-terminus); thereby promoting spliceosomal U1 snRNP recruitment to 5' splice sites.

It localises to the nucleus. In terms of biological role, component of the spliceosomal U1 snRNP, which is essential for recognition of the pre-mRNA 5' splice-site and the subsequent assembly of the spliceosome. SNRPC/U1-C is directly involved in initial 5' splice-site recognition for both constitutive and regulated alternative splicing. The interaction with the 5' splice-site seems to precede base-pairing between the pre-mRNA and the U1 snRNA. Stimulates commitment or early (E) complex formation by stabilizing the base pairing of the 5' end of the U1 snRNA and the 5' splice-site region. In Monodelphis domestica (Gray short-tailed opossum), this protein is U1 small nuclear ribonucleoprotein C.